Here is a 314-residue protein sequence, read N- to C-terminus: tRNA dimethylallyltransferase (314 aa).

Residue 12–19 (GPTASGKT) participates in ATP binding. 14–19 (TASGKT) contacts substrate. 2 interaction with substrate tRNA regions span residues 37–40 (DSAL) and 162–166 (QRIIR).

It belongs to the IPP transferase family. In terms of assembly, monomer. Requires Mg(2+) as cofactor.

It carries out the reaction adenosine(37) in tRNA + dimethylallyl diphosphate = N(6)-dimethylallyladenosine(37) in tRNA + diphosphate. Its function is as follows. Catalyzes the transfer of a dimethylallyl group onto the adenine at position 37 in tRNAs that read codons beginning with uridine, leading to the formation of N6-(dimethylallyl)adenosine (i(6)A). The chain is tRNA dimethylallyltransferase from Acinetobacter baumannii (strain AB0057).